A 387-amino-acid chain; its full sequence is S-adenosylmethionine synthase (387 aa).

An ATP-binding site is contributed by His-17. Asp-19 is a Mg(2+) binding site. Glu-45 is a K(+) binding site. Positions 58 and 101 each coordinate L-methionine. The flexible loop stretch occupies residues 101–111 (QSPDIAQGVDR). Residues 168-170 (DAK), 234-235 (RF), Asp-243, 249-250 (RK), Ala-266, and Lys-270 contribute to the ATP site. Asp-243 contributes to the L-methionine binding site. Lys-274 provides a ligand contact to L-methionine.

The protein belongs to the AdoMet synthase family. As to quaternary structure, homotetramer; dimer of dimers. Mg(2+) serves as cofactor. It depends on K(+) as a cofactor.

It localises to the cytoplasm. It catalyses the reaction L-methionine + ATP + H2O = S-adenosyl-L-methionine + phosphate + diphosphate. It participates in amino-acid biosynthesis; S-adenosyl-L-methionine biosynthesis; S-adenosyl-L-methionine from L-methionine: step 1/1. In terms of biological role, catalyzes the formation of S-adenosylmethionine (AdoMet) from methionine and ATP. The overall synthetic reaction is composed of two sequential steps, AdoMet formation and the subsequent tripolyphosphate hydrolysis which occurs prior to release of AdoMet from the enzyme. The chain is S-adenosylmethionine synthase from Bordetella petrii (strain ATCC BAA-461 / DSM 12804 / CCUG 43448).